Reading from the N-terminus, the 470-residue chain is uncharacterized protein (470 aa).

Positions 1–69 (MTRYQHLATL…PRSGYFVAQR (69 aa)) constitute an HTH gntR-type domain. An N6-(pyridoxal phosphate)lysine modification is found at Lys313.

This sequence in the C-terminal section; belongs to the class-I pyridoxal-phosphate-dependent aminotransferase family.

This is an uncharacterized protein from Escherichia coli (strain K12).